Reading from the N-terminus, the 566-residue chain is Glucose-6-phosphate isomerase, cytosolic (566 aa).

The Proton donor role is filled by glutamate 360. Catalysis depends on residues histidine 391 and lysine 516.

The protein belongs to the GPI family. In terms of assembly, homodimer.

The protein resides in the cytoplasm. It catalyses the reaction alpha-D-glucose 6-phosphate = beta-D-fructose 6-phosphate. It functions in the pathway carbohydrate degradation; glycolysis; D-glyceraldehyde 3-phosphate and glycerone phosphate from D-glucose: step 2/4. This chain is Glucose-6-phosphate isomerase, cytosolic (PGIC), found in Spinacia oleracea (Spinach).